Consider the following 300-residue polypeptide: Ribonuclease HIII (300 aa).

The region spanning 83 to 300 (IPIIGSDEVG…THKAQALLTK (218 aa)) is the RNase H type-2 domain. Positions 89, 90, and 194 each coordinate a divalent metal cation.

The protein belongs to the RNase HII family. RnhC subfamily. Mn(2+) serves as cofactor. It depends on Mg(2+) as a cofactor.

It localises to the cytoplasm. The catalysed reaction is Endonucleolytic cleavage to 5'-phosphomonoester.. In terms of biological role, endonuclease that specifically degrades the RNA of RNA-DNA hybrids. This chain is Ribonuclease HIII, found in Streptococcus pyogenes serotype M12 (strain MGAS2096).